The sequence spans 519 residues: Chaperone SurA (519 aa).

The N-terminal stretch at 1-31 (MMRSLHSLRRMSGTVLALMLAAGLPLSAAQA) is a signal peptide. Low complexity-rich tracts occupy residues 31–45 (AQPAKPAPKGDQKPA) and 197–207 (PAAAQATRAPA). Disordered regions lie at residues 31-50 (AQPAKPAPKGDQKPATPAPS) and 196-221 (NPAAAQATRAPAPQQPQPQPRQPAQS). One can recognise a PpiC 1 domain in the interval 223-324 (PAMLVLAQIL…NGFHILKVVD (102 aa)). The segment at 328–361 (GGQPAQAARPAPAPAPQQPSSFQEGPSVAAPQGP) is disordered. The 100-residue stretch at 364–463 (VTQTHARHIL…FGWHLIQVLE (100 aa)) folds into the PpiC 2 domain.

It localises to the periplasm. The catalysed reaction is [protein]-peptidylproline (omega=180) = [protein]-peptidylproline (omega=0). Functionally, chaperone involved in the correct folding and assembly of outer membrane proteins. Recognizes specific patterns of aromatic residues and the orientation of their side chains, which are found more frequently in integral outer membrane proteins. May act in both early periplasmic and late outer membrane-associated steps of protein maturation. The sequence is that of Chaperone SurA from Bordetella bronchiseptica (strain ATCC BAA-588 / NCTC 13252 / RB50) (Alcaligenes bronchisepticus).